The chain runs to 148 residues: uncharacterized protein (148 aa).

Helical transmembrane passes span 29-49, 61-81, 99-119, and 121-141; these read FSLV…AAKE, PIIL…PLVM, FIVF…NGFL, and ILVS…TLCI.

The protein localises to the cell membrane. This is an uncharacterized protein from Bacillus subtilis (strain 168).